Consider the following 545-residue polypeptide: Degenerin-like protein asic-2 (545 aa).

Residues 1–34 (MRGGGFVQIFKDFSNWSTVAVVPHVANANNKISR) lie on the Cytoplasmic side of the membrane. A helical transmembrane segment spans residues 35–55 (IFWIAIFLFVLGMFAYELYIL). Residues 56–457 (IAKFFSYPAT…NVINDLGGQA (402 aa)) lie on the Extracellular side of the membrane. C83 and C191 form a disulfide bridge. An N-linked (GlcNAc...) asparagine glycan is attached at N201. Cystine bridges form between C284/C370, C305/C366, C309/C364, C318/C343, and C320/C334. N-linked (GlcNAc...) asparagine glycosylation occurs at N350. Residues 458-478 (GLWLGLSVISVVEMTGLMLVM) traverse the membrane as a helical segment. A GAS motif; ion selectivity filter motif is present at residues 462–464 (GLS). Over 479 to 545 (GAFCVTGGAI…NKGDEEKKKK (67 aa)) the chain is Cytoplasmic. Composition is skewed to basic and acidic residues over residues 514 to 523 (DHLEKKHGEM) and 534 to 545 (IENKGDEEKKKK). Residues 514 to 545 (DHLEKKHGEMESGSDGEVDDIENKGDEEKKKK) form a disordered region.

This sequence belongs to the amiloride-sensitive sodium channel (TC 1.A.6) family. As to quaternary structure, can form homotrimers. Heterotrimer; forms functional heterotrimers producing channel with different properties.

Its subcellular location is the cell membrane. The enzyme catalyses Na(+)(in) = Na(+)(out). Its activity is regulated as follows. Inhibited by the diuretic drug amiloride. Its function is as follows. Could form pH-gated heterotrimeric sodium channels that act as postsynaptic excitatory sensors in the nervous system, generating rapid, transient inward currents that fully desensitize upon extracellular acidification. The sequence is that of Degenerin-like protein asic-2 (asic-2) from Caenorhabditis elegans.